A 512-amino-acid chain; its full sequence is Sucrose transport protein SUC5 (512 aa).

The interval 1 to 27 (MGALEAERAANNATALETQSSPEDLGQ) is disordered. The Cytoplasmic portion of the chain corresponds to 1 to 33 (MGALEAERAANNATALETQSSPEDLGQPSPLRK). A compositionally biased stretch (polar residues) spans 11–22 (NNATALETQSSP). Ser20 carries the post-translational modification Phosphoserine. The chain crosses the membrane as a helical span at residues 34–54 (IISVASIAAGVQFGWALQLSL). Topologically, residues 55–67 (LTPYIQLLGIPHK) are extracellular. Residues 68–88 (WSSYMWLCGPISGMIVQPIVG) form a helical membrane-spanning segment. Over 89-102 (YHSDRCESRFGRRR) the chain is Cytoplasmic. The helical transmembrane segment at 103–123 (PFIAAGVALVAVSVFLIGFAA) threads the bilayer. Residues 124–140 (DMGHSFGDKLENKVRTR) lie on the Extracellular side of the membrane. Residues 141 to 161 (AIIIFLTGFWFLDVANNTLQG) traverse the membrane as a helical segment. At 162 to 179 (PCRAFLADLAAGDAKKTR) the chain is on the cytoplasmic side. A helical membrane pass occupies residues 180-200 (VANACFSFFMAVGNVLGYAAG). Topologically, residues 201–225 (SYTNLHKMFPFTMTKACDIYCANLK) are extracellular. A helical membrane pass occupies residues 226 to 246 (TCFFLSITLLLIVTFSSLWYV). The Cytoplasmic portion of the chain corresponds to 247-281 (KDKQWSPPQGDKEEKTSSLFFFGEIFGAVRHMKRP). The helical transmembrane segment at 282–302 (MVMLLIVTVINWIAWFPFILY) threads the bilayer. Residues 303-333 (DTDWMGREVYGGNSDGDERSKKLYDQGVQAG) lie on the Extracellular side of the membrane. Residues 334 to 354 (ALGLMFNSILLGFVSLGVESI) traverse the membrane as a helical segment. The Cytoplasmic segment spans residues 355–363 (GRKMGGAKR). A helical membrane pass occupies residues 364–384 (LWGCVNFILAIGLAMTVLVTK). Topologically, residues 385 to 406 (SAEHHREIAGPLAGPSSGIKAG) are extracellular. Residues 407–427 (VFSLFTVLGIPLAITYSIPFA) traverse the membrane as a helical segment. Residues 428-440 (LASIFSTNSGAGQ) lie on the Cytoplasmic side of the membrane. A helical membrane pass occupies residues 441 to 461 (GLSLGVLNIAICIPQMIVSFS). Over 462 to 473 (SGPLDAQFGGGN) the chain is Extracellular. The helical transmembrane segment at 474-494 (LPSFVVGAIAAAVSGVLALTV) threads the bilayer. Topologically, residues 495–512 (LPSPPPDAPAMSGAMGFH) are cytoplasmic.

This sequence belongs to the glycoside-pentoside-hexuronide (GPH) cation symporter transporter (TC 2.A.2.4) family. In terms of tissue distribution, widely expressed. Expressed in the endosperm and on the epidermis of the outer surface of the cotyledons of torpedo-stage or older embryos.

It localises to the cell membrane. It carries out the reaction sucrose(out) + H(+)(out) = sucrose(in) + H(+)(in). It participates in glycan biosynthesis; sucrose metabolism. With respect to regulation, inhibited by protonophores (e.g. carbonyl cyanide m-chlorophenyl-hydrazone (CCCP)) and SH group inhibitors (e.g. p-chloromercuribenzene sulphonic acid (PCMBS)). Its function is as follows. Responsible in a heterologous system for the transport of sucrose into the cell, with the concomitant uptake of protons (symport system). Can also transport biotin, and probably maltose at a lesser rate. In planta, the role of SUC5 for the transport of sucrose seems to be negligible. Plays a role in the nutrition of the filial tissues during early seed development and is probably involved in the import of biotin into the endosperm and the embryo epidermis. The chain is Sucrose transport protein SUC5 from Arabidopsis thaliana (Mouse-ear cress).